Consider the following 765-residue polypeptide: uncharacterized protein (765 aa).

An N-terminal signal peptide occupies residues 1-22 (MKLKGFLAVGVSVFGFSGLLMA). Cys23 is lipidated: N-palmitoyl cysteine. Cys23 is lipidated: S-diacylglycerol cysteine. Disordered stretches follow at residues 177–203 (EGTPTSTTVQATVSSRSAEKKGTLEIA) and 218–255 (TAQNNSNETTKEQKQVKRSSSSSSTTSTTGETKDTTKS). Residues 179-192 (TPTSTTVQATVSSR) show a composition bias toward polar residues. The span at 236–247 (SSSSSSTTSTTG) shows a compositional bias: low complexity.

It belongs to the MG185/MG260 family.

The protein resides in the cell membrane. This is an uncharacterized protein from Mycoplasma genitalium (strain ATCC 33530 / DSM 19775 / NCTC 10195 / G37) (Mycoplasmoides genitalium).